A 548-amino-acid chain; its full sequence is Multidrug efflux system permease protein Rv1217c (548 aa).

12 helical membrane passes run 39 to 59 (VSLP…YIAS), 99 to 119 (GIWK…LTVI), 148 to 168 (ALLL…LGLL), 178 to 198 (VAFG…AAVA), 210 to 230 (AVAF…DAGS), 253 to 273 (WWVL…AYRL), 313 to 333 (LLWT…VHGI), 359 to 379 (AFLA…AVSL), 410 to 430 (LAMA…AAGL), 450 to 470 (AAVQ…LFGL), 477 to 497 (VAWG…LAGF), and 521 to 541 (VPLL…AMAF).

As to quaternary structure, the complex is probably composed of two ATP-binding proteins (Rv1218c) and a transmembrane protein (Rv1217c).

The protein resides in the cell inner membrane. Probably part of the ABC transporter complex Rv1217c-Rv1218c involved in the resistance to a wide range of structurally unrelated drugs. Probably responsible for the translocation of the substrate across the membrane. This Mycobacterium tuberculosis (strain ATCC 25618 / H37Rv) protein is Multidrug efflux system permease protein Rv1217c.